A 387-amino-acid polypeptide reads, in one-letter code: Protein RecA (387 aa).

Residue 80-87 participates in ATP binding; it reads GPESSGKT. The tract at residues 348–387 is disordered; sequence LDDSEVAETEEETTASKTKAKAKKEEKAVETEEIELELED. Composition is skewed to acidic residues over residues 349 to 360 and 378 to 387; these read DDSEVAETEEET and TEEIELELED.

Belongs to the RecA family.

The protein localises to the cytoplasm. In terms of biological role, can catalyze the hydrolysis of ATP in the presence of single-stranded DNA, the ATP-dependent uptake of single-stranded DNA by duplex DNA, and the ATP-dependent hybridization of homologous single-stranded DNAs. It interacts with LexA causing its activation and leading to its autocatalytic cleavage. The sequence is that of Protein RecA from Lactococcus lactis subsp. cremoris (strain MG1363).